The primary structure comprises 344 residues: GTP 3',8-cyclase (344 aa).

Residues 19–244 (PFARPITYLR…TPLAERTGGP (226 aa)) form the Radical SAM core domain. Arginine 28 provides a ligand contact to GTP. The [4Fe-4S] cluster site is built by cysteine 35 and cysteine 39. Tyrosine 41 contacts S-adenosyl-L-methionine. Cysteine 42 serves as a coordination point for [4Fe-4S] cluster. Position 77 (arginine 77) interacts with GTP. Position 81 (glycine 81) interacts with S-adenosyl-L-methionine. A GTP-binding site is contributed by threonine 110. Residue serine 134 participates in S-adenosyl-L-methionine binding. Lysine 170 provides a ligand contact to GTP. An S-adenosyl-L-methionine-binding site is contributed by methionine 204. [4Fe-4S] cluster is bound by residues cysteine 268 and cysteine 271. 273–275 (RVR) lines the GTP pocket. Residue cysteine 285 participates in [4Fe-4S] cluster binding.

This sequence belongs to the radical SAM superfamily. MoaA family. As to quaternary structure, monomer and homodimer. [4Fe-4S] cluster serves as cofactor.

It catalyses the reaction GTP + AH2 + S-adenosyl-L-methionine = (8S)-3',8-cyclo-7,8-dihydroguanosine 5'-triphosphate + 5'-deoxyadenosine + L-methionine + A + H(+). It participates in cofactor biosynthesis; molybdopterin biosynthesis. Catalyzes the cyclization of GTP to (8S)-3',8-cyclo-7,8-dihydroguanosine 5'-triphosphate. The chain is GTP 3',8-cyclase from Paracoccus denitrificans (strain Pd 1222).